The primary structure comprises 637 residues: Threonine--tRNA ligase (637 aa).

The TGS domain maps to 1–61 (MLNITLPDGS…TEDSSVQIIT (61 aa)). The interval 242 to 533 (DHRKLGKQLD…LIENHAGSFP (292 aa)) is catalytic. Residues Cys333, His384, and His510 each coordinate Zn(2+).

This sequence belongs to the class-II aminoacyl-tRNA synthetase family. As to quaternary structure, homodimer. Requires Zn(2+) as cofactor.

It localises to the cytoplasm. The catalysed reaction is tRNA(Thr) + L-threonine + ATP = L-threonyl-tRNA(Thr) + AMP + diphosphate + H(+). Catalyzes the attachment of threonine to tRNA(Thr) in a two-step reaction: L-threonine is first activated by ATP to form Thr-AMP and then transferred to the acceptor end of tRNA(Thr). Also edits incorrectly charged L-seryl-tRNA(Thr). The sequence is that of Threonine--tRNA ligase from Neisseria meningitidis serogroup C (strain 053442).